Consider the following 247-residue polypeptide: 3-deoxy-manno-octulosonate cytidylyltransferase (247 aa).

It belongs to the KdsB family.

It localises to the cytoplasm. The catalysed reaction is 3-deoxy-alpha-D-manno-oct-2-ulosonate + CTP = CMP-3-deoxy-beta-D-manno-octulosonate + diphosphate. It functions in the pathway nucleotide-sugar biosynthesis; CMP-3-deoxy-D-manno-octulosonate biosynthesis; CMP-3-deoxy-D-manno-octulosonate from 3-deoxy-D-manno-octulosonate and CTP: step 1/1. The protein operates within bacterial outer membrane biogenesis; lipopolysaccharide biosynthesis. Activates KDO (a required 8-carbon sugar) for incorporation into bacterial lipopolysaccharide in Gram-negative bacteria. The protein is 3-deoxy-manno-octulosonate cytidylyltransferase of Methylorubrum populi (strain ATCC BAA-705 / NCIMB 13946 / BJ001) (Methylobacterium populi).